The sequence spans 499 residues: 3-beta-hydroxylase (499 aa).

The chain crosses the membrane as a helical; Signal-anchor for type II membrane protein span at residues 2 to 22 (FSSFETLILSFVSLFFMMIFI). Residue Cys-441 participates in heme binding.

This sequence belongs to the cytochrome P450 family. Heme is required as a cofactor.

Its subcellular location is the membrane. The catalysed reaction is (+)-costunolide + reduced [NADPH--hemoprotein reductase] + O2 = 3beta-hydroxycostunolide + oxidized [NADPH--hemoprotein reductase] + H2O + H(+). The enzyme catalyses parthenolide + reduced [NADPH--hemoprotein reductase] + O2 = 3beta-hydroxyparthenolide + oxidized [NADPH--hemoprotein reductase] + H2O + H(+). Its pathway is secondary metabolite biosynthesis; terpenoid biosynthesis. Involved in the biosynthesis of germacrene-derived sesquiterpene lactones. Component of the parthenolide biosynthetic pathway; parthenolide and conjugates are promising anti-cancer drugs highly active against colon cancer cells. Catalyzes the conversion of costunolide and parthenolide to 3-beta-hydroxycostunolide and 3-beta-hydroxyparthenolide, respectively. In Tanacetum parthenium (Feverfew), this protein is 3-beta-hydroxylase.